A 232-amino-acid chain; its full sequence is MGQKINPIGLRLGINRTWDSRWYAGKNEYGKLLHEDVKIREILHKELKQAAVARIVIERPHKKCRVTIHSARPGVVIGKKGADIDKLRKKVADITASDVVINIVEIRKPELDATLVAESIAQQLERRVAFRRAMKRAVQSAMRLGAEGIRINCSGRLGGAEIARMEWYREGRVPLHTLRADIDYGVATAFTTFGTCGVKVWIFKGEILEHDPMAQDKRMAEGDNSRPRRDAA.

Positions 39-107 (IREILHKELK…DVVINIVEIR (69 aa)) constitute a KH type-2 domain.

This sequence belongs to the universal ribosomal protein uS3 family. Part of the 30S ribosomal subunit. Forms a tight complex with proteins S10 and S14.

In terms of biological role, binds the lower part of the 30S subunit head. Binds mRNA in the 70S ribosome, positioning it for translation. This Rhodopseudomonas palustris (strain BisB18) protein is Small ribosomal subunit protein uS3.